The following is a 459-amino-acid chain: Sorting nexin-8 (459 aa).

The disordered stretch occupies residues 1–37 (MTGRAMDPLPSPAVAAAAEAEADEEADPPATGPRTSQ). Positions 68-176 (AKDTVQVELI…KLFLSFSGSD (109 aa)) constitute a PX domain. 3 residues coordinate a 1,2-diacyl-sn-glycero-3-phospho-(1D-myo-inositol-3-phosphate): Arg-104, Lys-130, and Arg-143. Thr-446 is subject to Phosphothreonine. Ser-450 carries the phosphoserine modification.

The protein belongs to the sorting nexin family.

It localises to the early endosome membrane. Functionally, may be involved in several stages of intracellular trafficking. May play a role in intracellular protein transport from early endosomes to the trans-Golgi network. The chain is Sorting nexin-8 (Snx8) from Mus musculus (Mouse).